The primary structure comprises 93 residues: DNA-binding protein HU 1 (93 aa).

This sequence belongs to the bacterial histone-like protein family. As to quaternary structure, homodimer.

The protein localises to the cytoplasm. Its subcellular location is the nucleoid. Its function is as follows. Histone-like DNA-binding protein which is capable of wrapping DNA to stabilize it, and thus to prevent its denaturation under extreme environmental conditions. In Streptomyces coelicolor (strain ATCC BAA-471 / A3(2) / M145), this protein is DNA-binding protein HU 1 (hup1).